The chain runs to 114 residues: Hydrogenase maturation factor HypA (114 aa).

Histidine 2 contributes to the Ni(2+) binding site. Residues cysteine 70, cysteine 73, cysteine 86, and cysteine 89 each coordinate Zn(2+).

The protein belongs to the HypA/HybF family.

Functionally, involved in the maturation of [NiFe] hydrogenases. Required for nickel insertion into the metal center of the hydrogenase. The sequence is that of Hydrogenase maturation factor HypA from Trichodesmium erythraeum (strain IMS101).